The primary structure comprises 230 residues: Transcriptional regulatory protein CitT (230 aa).

The Response regulatory domain maps to 6–124; it reads KVLIIEDDFR…VLHQRLDAYV (119 aa). Asp59 carries the 4-aspartylphosphate modification. Positions 184-203 form a DNA-binding region, H-T-H motif; the sequence is AMEGARLIGASRSTVRRYFE.

In terms of processing, phosphorylated by CitS.

The protein resides in the cytoplasm. Functionally, member of the two-component regulatory system CitT/CitS. The protein is Transcriptional regulatory protein CitT (citT) of Halalkalibacterium halodurans (strain ATCC BAA-125 / DSM 18197 / FERM 7344 / JCM 9153 / C-125) (Bacillus halodurans).